The chain runs to 454 residues: MPQKTSKSKSSRTRYIEDSDDETRGRSRNRSIEKSRSRSLDKSQKKSRDKSLTRSRSKSPEKSKSRSKSLTRSRSKSPKKCITGNRKNSKHTKKDNEYTTEESDEESDDESDGETNEESDEELDNKSDGESDEEISEESDEEISEESDEDVPEEEYDDNDIRNIIIENINNEFARGKFGDFNVIIMKDNGFINATKLCKNAGSDFYHWKETKKAKELINELISSPGIKGDEVISTITGGKLTEIRGTYAHPKLIIQIAAWCSAEYALKVSDIVIEYHAKEAIEQKEKLLKKKDDKIDKLSKKIDEQKKEIKKLLEQGNEVLGYAKDTNRKINHVVNERVPYSDKPEIEHQLIIMKNNDKDKKQYKYSALRVMNKSKSSALSRYYKSHPKGNVILTIKYTPNSMHLWNECKDDLHKKKIKLSKKSSKFNLREDYTEKQLIKDIKKIHNARLQHPN.

Residues 1–12 (MPQKTSKSKSSR) show a composition bias toward basic residues. Residues 1–159 (MPQKTSKSKS…DVPEEEYDDN (159 aa)) are disordered. Positions 14 to 64 (RYIEDSDDETRGRSRNRSIEKSRSRSLDKSQKKSRDKSLTRSRSKSPEKSK) are enriched in basic and acidic residues. Over residues 65-79 (SRSKSLTRSRSKSPK) the composition is skewed to basic residues. Composition is skewed to acidic residues over residues 98–123 (YTTE…DEEL) and 130–158 (ESDE…EYDD). Residues 172–276 (EFARGKFGDF…LKVSDIVIEY (105 aa)) enclose the KilA-N domain.

This is Putative KilA-N domain-containing protein L4 from Acanthamoeba polyphaga mimivirus (APMV).